A 369-amino-acid polypeptide reads, in one-letter code: Aminomethyltransferase (369 aa).

It belongs to the GcvT family. In terms of assembly, the glycine cleavage system is composed of four proteins: P, T, L and H.

The catalysed reaction is N(6)-[(R)-S(8)-aminomethyldihydrolipoyl]-L-lysyl-[protein] + (6S)-5,6,7,8-tetrahydrofolate = N(6)-[(R)-dihydrolipoyl]-L-lysyl-[protein] + (6R)-5,10-methylene-5,6,7,8-tetrahydrofolate + NH4(+). Functionally, the glycine cleavage system catalyzes the degradation of glycine. This is Aminomethyltransferase from Xanthomonas axonopodis pv. citri (strain 306).